The primary structure comprises 210 residues: Protein-methionine-sulfoxide reductase heme-binding subunit MsrQ (210 aa).

A run of 6 helical transmembrane segments spans residues 8 to 28 (LAVFLAACVAPVWWLYQAWIF), 37 to 57 (VLVEDFGLATLVMLLITMSMT), 75 to 95 (LGLWCFAYVVLHMTMYALFIL), 110 to 130 (PYIIVGALAFLGLLALAVTSN), 147 to 167 (LIYVILGLGLLHMFWIVRADL), and 169 to 189 (EWALYAGIGAFLLLLRIPMIT).

This sequence belongs to the MsrQ family. In terms of assembly, heterodimer of a catalytic subunit (MsrP) and a heme-binding subunit (MsrQ). The cofactor is FMN. Requires heme b as cofactor.

It localises to the cell inner membrane. Its function is as follows. Part of the MsrPQ system that repairs oxidized periplasmic proteins containing methionine sulfoxide residues (Met-O), using respiratory chain electrons. Thus protects these proteins from oxidative-stress damage caused by reactive species of oxygen and chlorine generated by the host defense mechanisms. MsrPQ is essential for the maintenance of envelope integrity under bleach stress, rescuing a wide series of structurally unrelated periplasmic proteins from methionine oxidation. MsrQ provides electrons for reduction to the reductase catalytic subunit MsrP, using the quinone pool of the respiratory chain. In Pseudomonas savastanoi pv. phaseolicola (strain 1448A / Race 6) (Pseudomonas syringae pv. phaseolicola (strain 1448A / Race 6)), this protein is Protein-methionine-sulfoxide reductase heme-binding subunit MsrQ.